A 410-amino-acid polypeptide reads, in one-letter code: 3-phosphoshikimate 1-carboxyvinyltransferase (410 aa).

Lys27, Ser28, and Arg32 together coordinate 3-phosphoshikimate. Phosphoenolpyruvate is bound at residue Lys27. Phosphoenolpyruvate is bound by residues Gly91 and Arg119. Residues Ser161, Ser162, Gln163, Asp297, Gln319, and Lys323 each contribute to the 3-phosphoshikimate site. Position 163 (Gln163) interacts with phosphoenolpyruvate. Residue Asp297 is the Proton acceptor of the active site. Residues Arg327, Arg368, and Lys394 each coordinate phosphoenolpyruvate.

This sequence belongs to the EPSP synthase family. Monomer.

The protein resides in the cytoplasm. It catalyses the reaction 3-phosphoshikimate + phosphoenolpyruvate = 5-O-(1-carboxyvinyl)-3-phosphoshikimate + phosphate. Its pathway is metabolic intermediate biosynthesis; chorismate biosynthesis. Functionally, catalyzes the transfer of the enolpyruvyl moiety of phosphoenolpyruvate (PEP) to the 5-hydroxyl of shikimate-3-phosphate (S3P) to produce enolpyruvyl shikimate-3-phosphate and inorganic phosphate. This is 3-phosphoshikimate 1-carboxyvinyltransferase from Pyrococcus abyssi (strain GE5 / Orsay).